A 324-amino-acid polypeptide reads, in one-letter code: Envelope protein H3 (324 aa).

Over 1-284 (MAAVKTPVIV…FTTPLISFFG (284 aa)) the chain is Virion surface. A helical; Signal-anchor transmembrane segment spans residues 285–305 (LFDINVIGLIVILFIMFMLIF). Residues 306–324 (NVKSKLLWFLTGTFVTAFI) are Intravirion-facing.

Belongs to the orthopoxvirus OPG108 family. Does not contain disulfide bonds.

It is found in the virion membrane. In terms of biological role, envelope protein that binds to heparan sulfate on the cell surface and might provide virion attachment to target cell. This is Envelope protein H3 (OPG108) from Homo sapiens (Human).